The primary structure comprises 374 residues: Glycerophosphodiester phosphodiesterase GDPD2 (374 aa).

Residues 38-326 (FSVIGHRGIG…DFVEEIIEST (289 aa)) enclose the GP-PDE domain. The tract at residues 330–349 (MIRPPPSSSPLPSPSKDDDV) is disordered. Positions 332–342 (RPPPSSSPLPS) are enriched in pro residues.

It belongs to the glycerophosphoryl diester phosphodiesterase family. In terms of tissue distribution, expressed in roots, shoots, flowers and siliques.

It carries out the reaction a sn-glycero-3-phosphodiester + H2O = an alcohol + sn-glycerol 3-phosphate + H(+). This is Glycerophosphodiester phosphodiesterase GDPD2 from Arabidopsis thaliana (Mouse-ear cress).